Consider the following 347-residue polypeptide: NADH-ubiquinone oxidoreductase chain 2 (347 aa).

The next 10 helical transmembrane spans lie at 1-21 (MNPL…TIVM), 25-45 (HWLV…PVLM), 59-79 (YFLT…INLI), 96-116 (IIMT…FWVP), 122-142 (IQLS…ISIL), 150-170 (NLNL…WGGL), 201-221 (ALLN…VFML), 242-262 (TALL…GFLP), 274-294 (NSVI…YFYM), and 326-346 (LSPL…LTLL).

It belongs to the complex I subunit 2 family. As to quaternary structure, core subunit of respiratory chain NADH dehydrogenase (Complex I) which is composed of 45 different subunits. Interacts with TMEM242.

Its subcellular location is the mitochondrion inner membrane. It catalyses the reaction a ubiquinone + NADH + 5 H(+)(in) = a ubiquinol + NAD(+) + 4 H(+)(out). Functionally, core subunit of the mitochondrial membrane respiratory chain NADH dehydrogenase (Complex I) which catalyzes electron transfer from NADH through the respiratory chain, using ubiquinone as an electron acceptor. Essential for the catalytic activity and assembly of complex I. The protein is NADH-ubiquinone oxidoreductase chain 2 of Eidolon helvum (Straw-colored fruit bat).